Consider the following 328-residue polypeptide: 17-beta-hydroxysteroid dehydrogenase type 1 (328 aa).

NADP(+)-binding positions include 10 to 38 and aspartate 66; that span reads GCSSGIGLHLAVRLASDPSQSFKVYATLR. Position 135 is a phosphoserine; by PKA (serine 135). A substrate-binding site is contributed by serine 143. The active-site Proton acceptor is the tyrosine 156. Lysine 160 provides a ligand contact to NADP(+). The interval 291–328 is disordered; the sequence is KAEAGAEAGGGAGPGAEDEAGRGAVGDPELGDPPAAPQ.

Belongs to the short-chain dehydrogenases/reductases (SDR) family. Homodimer. Exists predominantly as a homodimer but also exits as monomer.

The protein localises to the cytoplasm. The enzyme catalyses 17beta-estradiol + NAD(+) = estrone + NADH + H(+). It catalyses the reaction 17beta-estradiol + NADP(+) = estrone + NADPH + H(+). It carries out the reaction testosterone + NADP(+) = androst-4-ene-3,17-dione + NADPH + H(+). It participates in steroid biosynthesis; estrogen biosynthesis. Functionally, favors the reduction of estrogens and androgens. Converts estrone (E1) to a more potent estrogen, 17beta-estradiol (E2). Also has 20-alpha-HSD activity. Uses preferentially NADH. The protein is 17-beta-hydroxysteroid dehydrogenase type 1 of Homo sapiens (Human).